Reading from the N-terminus, the 486-residue chain is uncharacterized protein (486 aa).

Position 24–35 (I24–A35) interacts with NAD(+).

The protein belongs to the mannitol dehydrogenase family. UxuB subfamily.

This is an uncharacterized protein from Escherichia coli (strain K12).